A 29-amino-acid chain; its full sequence is GWTLNSAGYLLGPHGIDGHRTLSDKHGLA.

An Alanine amide modification is found at Ala29.

It belongs to the galanin family.

It localises to the secreted. Contracts smooth muscle of the gastrointestinal and genitourinary tract, regulates growth hormone release, modulates insulin release, and may be involved in the control of adrenal secretion. The sequence is that of Galanin (gal) from Oncorhynchus mykiss (Rainbow trout).